The primary structure comprises 1014 residues: MKTHSNVSWLRDVNVFAVNRLPAHSDHVYYETVEEAKKEPPMSMRHSLNGHWKFHYAINPNTRPKEFYQLGFDCKCWDDILVPGHIQLQGYGKPQYVNTMYPWDGHHHLRPPEIPEDDNPVGSYVKYFDIPNNMSNHPLFISFQGVETAFYVWLNGEFVGYSEDSFTPAEFDLTPYAVEGENKLCVEVYQRSTGSWLEDQDFWRFSGIFRDVYLYTIPNIHVYDMHVRADLDRSLQTGILETTLELKRSQEKEVMIVAELYDAEGAVVATADMKTNQDQATVSMSVDSPALWSAEDPYLYKLFLKLFDENGTLVEVVPQKIGFRRFELVNNIMTLNGKRIVFKGVNRHEFNGRTGRVVTKEDMLEDIKTMKKHNINAVRTSHYPNNSEWYQLCDEYGLYVIDEMNLETHGSWQKLGKVEPSWNIPGNHLEWEPIVMDRAVSMFERDKNHPSILIWSCGNESYAGEVILNVSRYFKSVDPSRLVHYEGVFHARAYDATSDMESRMYAKPKDIEDYLTNDPKKPYISCEYMHAMGNSLGGMHKYTELEQKYPMYQGGFIWDYIDQALLKKDRYGKEYFAYGGDFGDRPTDYSFCANGIVYADRKPSPKMQEVKFLYQNIKLVPDREGVLVKNENLFTDTSAYQLEYVLYWEGTELYRKKQDVFVAPQEEVYLPFDWLEQGMNESGEYCIHTMLTLKQDQLWAEKGHEVAFGQHVYRMGAIQKERNARGALKVVHGDVNIGIHGEDFSVLFSKAVGSLVSLHYAGKEMIEQPPMPLFWRATTDNDKGCSQLYHSGIWYAASLARKCVNMEVEEKPGHVSVLFTYHFAISDRVEVKVGYTVFPDGSLRVRSTYQASKGGETLPQLPMFALSFKLPADYEQLEWYALGPEENYADRATGARLCTFKNKVEDSLSQYVTPQESGNRTGVRTVKILDANGQGIEVCSVEEPIECQISPYTAFELEQASHPYELPNVHYTVVNVAGKQMGVGGDDSWGAPVHDEYVLKADQDLEFVFDINRV.

The active-site Proton donor is the E460. E527 acts as the Nucleophile in catalysis.

Belongs to the glycosyl hydrolase 2 family.

The catalysed reaction is Hydrolysis of terminal non-reducing beta-D-galactose residues in beta-D-galactosides.. This is Beta-galactosidase (lacZ) from Halalkalibacterium halodurans (strain ATCC BAA-125 / DSM 18197 / FERM 7344 / JCM 9153 / C-125) (Bacillus halodurans).